Here is a 392-residue protein sequence, read N- to C-terminus: Heat-inducible transcription repressor HrcA (392 aa).

Belongs to the HrcA family.

Negative regulator of class I heat shock genes (grpE-dnaK-dnaJ and groELS operons). Prevents heat-shock induction of these operons. This is Heat-inducible transcription repressor HrcA from Synechococcus sp. (strain JA-3-3Ab) (Cyanobacteria bacterium Yellowstone A-Prime).